A 468-amino-acid chain; its full sequence is Glutamate--tRNA ligase (468 aa).

The 'HIGH' region motif lies at 8–18 (PSPTGFLHVGG). Residues Cys97, Cys99, Cys124, and Asp126 each coordinate Zn(2+). The 'KMSKS' region motif lies at 236–240 (KLSKR). Residue Lys239 coordinates ATP.

The protein belongs to the class-I aminoacyl-tRNA synthetase family. Glutamate--tRNA ligase type 1 subfamily. In terms of assembly, monomer. It depends on Zn(2+) as a cofactor.

Its subcellular location is the cytoplasm. It catalyses the reaction tRNA(Glu) + L-glutamate + ATP = L-glutamyl-tRNA(Glu) + AMP + diphosphate. In terms of biological role, catalyzes the attachment of glutamate to tRNA(Glu) in a two-step reaction: glutamate is first activated by ATP to form Glu-AMP and then transferred to the acceptor end of tRNA(Glu). In Francisella tularensis subsp. tularensis (strain SCHU S4 / Schu 4), this protein is Glutamate--tRNA ligase.